We begin with the raw amino-acid sequence, 658 residues long: Biosynthetic arginine decarboxylase (658 aa).

Lysine 127 bears the N6-(pyridoxal phosphate)lysine mark. 307–317 (FDVGGGLGVDY) lines the substrate pocket.

It belongs to the Orn/Lys/Arg decarboxylase class-II family. SpeA subfamily. It depends on Mg(2+) as a cofactor. Pyridoxal 5'-phosphate is required as a cofactor.

It carries out the reaction L-arginine + H(+) = agmatine + CO2. It functions in the pathway amine and polyamine biosynthesis; agmatine biosynthesis; agmatine from L-arginine: step 1/1. Catalyzes the biosynthesis of agmatine from arginine. The protein is Biosynthetic arginine decarboxylase of Salmonella typhi.